Consider the following 397-residue polypeptide: Elongation factor Tu (397 aa).

Positions 10-206 (KPHVNIGTIG…AVDENVPDPE (197 aa)) constitute a tr-type G domain. The interval 19-26 (GHVDHGKT) is G1. 19-26 (GHVDHGKT) is a GTP binding site. Thr26 provides a ligand contact to Mg(2+). The tract at residues 62-66 (GITIQ) is G2. The segment at 83-86 (DAPG) is G3. GTP is bound by residues 83-87 (DAPGH) and 138-141 (NKAD). Residues 138–141 (NKAD) are G4. The segment at 176-178 (SAL) is G5.

It belongs to the TRAFAC class translation factor GTPase superfamily. Classic translation factor GTPase family. EF-Tu/EF-1A subfamily. Monomer.

The protein resides in the cytoplasm. The catalysed reaction is GTP + H2O = GDP + phosphate + H(+). Its function is as follows. GTP hydrolase that promotes the GTP-dependent binding of aminoacyl-tRNA to the A-site of ribosomes during protein biosynthesis. The protein is Elongation factor Tu of Saccharopolyspora erythraea (strain ATCC 11635 / DSM 40517 / JCM 4748 / NBRC 13426 / NCIMB 8594 / NRRL 2338).